A 448-amino-acid polypeptide reads, in one-letter code: B box and SPRY domain-containing protein (448 aa).

Positions Met1–Ser18 are enriched in low complexity. Residues Met1–Pro58 are disordered. Residues Val19 to Gly51 are compositionally biased toward pro residues. A B box-type zinc finger spans residues Gln63–Glu111. In terms of domain architecture, B30.2/SPRY spans Ser257 to Cys448.

Interacts with TRPV5 and TRPV6. Interacts with YWHAZ/14-3-3 protein zeta. In terms of tissue distribution, predominantly expressed in testis. Expressed in brain at low levels.

The protein localises to the cytoplasm. It localises to the membrane. Its function is as follows. May regulate epithelial calcium transport by inhibiting TRPV5 activity. This chain is B box and SPRY domain-containing protein (Bspry), found in Rattus norvegicus (Rat).